A 335-amino-acid polypeptide reads, in one-letter code: Phosphate acyltransferase (335 aa).

It belongs to the PlsX family. As to quaternary structure, homodimer. Probably interacts with PlsY.

It localises to the cytoplasm. The catalysed reaction is a fatty acyl-[ACP] + phosphate = an acyl phosphate + holo-[ACP]. The protein operates within lipid metabolism; phospholipid metabolism. Functionally, catalyzes the reversible formation of acyl-phosphate (acyl-PO(4)) from acyl-[acyl-carrier-protein] (acyl-ACP). This enzyme utilizes acyl-ACP as fatty acyl donor, but not acyl-CoA. The chain is Phosphate acyltransferase from Clostridium botulinum (strain Langeland / NCTC 10281 / Type F).